A 431-amino-acid polypeptide reads, in one-letter code: Ribosomal RNA small subunit methyltransferase B (431 aa).

S-adenosyl-L-methionine contacts are provided by residues 254 to 260, Asp-277, Asp-303, and Asp-322; that span reads CAAPGGK. Cys-375 functions as the Nucleophile in the catalytic mechanism. Residues 398–417 are disordered; sequence LHATGTPASPGQQNLPGPEE. Residues 403–412 show a composition bias toward polar residues; that stretch reads TPASPGQQNL.

This sequence belongs to the class I-like SAM-binding methyltransferase superfamily. RsmB/NOP family.

The protein localises to the cytoplasm. It catalyses the reaction cytidine(967) in 16S rRNA + S-adenosyl-L-methionine = 5-methylcytidine(967) in 16S rRNA + S-adenosyl-L-homocysteine + H(+). Specifically methylates the cytosine at position 967 (m5C967) of 16S rRNA. The polypeptide is Ribosomal RNA small subunit methyltransferase B (Klebsiella pneumoniae (strain 342)).